Here is a 290-residue protein sequence, read N- to C-terminus: Arylamine N-acetyltransferase 1 (290 aa).

The residue at position 1 (Met-1) is an N-acetylmethionine. Catalysis depends on Cys-68, which acts as the Acyl-thioester intermediate. CoA-binding residues include Thr-103 and Gly-104. Substrate is bound at residue 106–107 (IH). Residues His-107 and Asp-122 contribute to the active site. Tyr-208 and Ser-214 together coordinate CoA.

It belongs to the arylamine N-acetyltransferase family.

It is found in the cytoplasm. It catalyses the reaction an arylamine + acetyl-CoA = an N-acetylarylamine + CoA. Functionally, participates in the detoxification of a plethora of hydrazine and arylamine drugs. Catalyzes the N- or O-acetylation of various arylamine and heterocyclic amine substrates and is able to bioactivate several known carcinogens. This is Arylamine N-acetyltransferase 1 (NAT1) from Homo sapiens (Human).